The sequence spans 58 residues: MKISFLLLLAIVICSIGWTEAQFTNVSCSASSQCWPVCKKLFGTYRGKCMNSKCRCYS.

Positions 1-21 (MKISFLLLLAIVICSIGWTEA) are cleaved as a signal peptide. Gln22 bears the Pyrrolidone carboxylic acid mark. Intrachain disulfides connect Cys28–Cys49, Cys34–Cys54, and Cys38–Cys56.

This sequence belongs to the short scorpion toxin superfamily. Potassium channel inhibitor family. Alpha-KTx 01 subfamily. Expressed by the venom gland.

The protein resides in the secreted. Functionally, potent blocker of both large-conductance calcium-activated potassium channels (KCa1.1/KCNMA1) and voltage-gated potassium channels (Kv1.3/KCNA3 and ERG1/Kv11.1/KCNH2). In Olivierus martensii (Manchurian scorpion), this protein is Potassium channel toxin alpha-KTx 1.6.